A 326-amino-acid polypeptide reads, in one-letter code: tRNA-modifying protein YgfZ (326 aa).

Folate contacts are provided by W27 and W189.

The protein belongs to the tRNA-modifying YgfZ family.

Its subcellular location is the cytoplasm. Folate-binding protein involved in regulating the level of ATP-DnaA and in the modification of some tRNAs. It is probably a key factor in regulatory networks that act via tRNA modification, such as initiation of chromosomal replication. This is tRNA-modifying protein YgfZ from Salmonella schwarzengrund (strain CVM19633).